A 562-amino-acid chain; its full sequence is 3-hydroxy-3-methylglutaryl-coenzyme A reductase 2 (562 aa).

The next 2 helical transmembrane spans lie at 32–56 (ALPL…YFLL) and 77–100 (ICAL…DLIF). The interval 101–146 (RSSSDDDVWVNDGMIPCNQSLDCREVLPIKPNSVDPPRESELDSVE) is linker. Asparagine 118 is a glycosylation site (N-linked (GlcNAc...) asparagine). Positions 147-562 (DEEIVKLVID…DIGPSSQVNR (416 aa)) are catalytic. Residue glutamate 240 is the Charge relay system of the active site. A glycan (N-linked (GlcNAc...) asparagine) is linked at asparagine 304. Residues lysine 372 and aspartate 448 each act as charge relay system in the active site. The active-site Proton donor is histidine 544. Asparagine 548 carries N-linked (GlcNAc...) asparagine glycosylation. Phosphoserine is present on serine 550.

It belongs to the HMG-CoA reductase family. As to expression, restricted to young seedlings, roots, and inflorescences. Expressed in root tips, shoot apex, secretory zone of the stigma, microspores, mature pollen grains, gynoecium vascular tissue and fertilized ovules.

The protein resides in the endoplasmic reticulum membrane. The catalysed reaction is (R)-mevalonate + 2 NADP(+) + CoA = (3S)-3-hydroxy-3-methylglutaryl-CoA + 2 NADPH + 2 H(+). It functions in the pathway metabolic intermediate biosynthesis; (R)-mevalonate biosynthesis; (R)-mevalonate from acetyl-CoA: step 3/3. Regulated at the post-translational level in response to alterations of the sphingolipid and the sterol biosynthetic pathways. Catalyzes the synthesis of mevalonate. The specific precursor of all isoprenoid compounds present in plants. The protein is 3-hydroxy-3-methylglutaryl-coenzyme A reductase 2 (HMG2) of Arabidopsis thaliana (Mouse-ear cress).